Consider the following 522-residue polypeptide: Stellatic acid synthase (522 aa).

A helical membrane pass occupies residues 23 to 43 (IYGIYEPLLALFAVYSVAVVV). Residues Asn267 and Asn451 are each glycosylated (N-linked (GlcNAc...) asparagine). Cys464 serves as a coordination point for heme. N-linked (GlcNAc...) asparagine glycosylation is present at Asn495.

The protein belongs to the cytochrome P450 family. The cofactor is heme.

Its subcellular location is the membrane. It carries out the reaction stellata-2,6,19-triene + 3 reduced [NADPH--hemoprotein reductase] + 3 O2 = stellatate + 3 oxidized [NADPH--hemoprotein reductase] + 4 H2O + 4 H(+). It functions in the pathway secondary metabolite biosynthesis; terpenoid biosynthesis. Functionally, cytochrome P450 monooxygenase; part of the gene cluster that mediates the biosynthesis of the sesterterpene stellatic acid. The first step in the pathway is performed by the stellatatriene synthase that possesses both prenyl transferase and terpene cyclase activity, converting isopentenyl diphosphate and dimethylallyl diphosphate into geranylgeranyl diphosphate (GGDP) and then converting GGDP into stellata-2,6,19-triene. The cytochrome P450 monooxygenase Stl-P450 then catalyzes three successive oxidation reactions on the C-20 methyl group to generate the carboxylic acid of stellatic acid. The sequence is that of Stellatic acid synthase from Emericella variicolor (Aspergillus stellatus).